The following is a 427-amino-acid chain: Transcriptional enhancer factor TEF-3 (427 aa).

The disordered stretch occupies residues 1–32; the sequence is MTSNEWSSPDSPEGSSISGGSQALDKPIDNDA. Positions 7-21 are enriched in low complexity; sequence SSPDSPEGSSISGGS. Positions 29-105 form a DNA-binding region, TEA; that stretch reads DNDAEGVWSP…QVLARRKARE (77 aa). The Nuclear localization signal motif lies at 78-94; it reads IKLRTGKTRTRKQVSSH. The interval 163–206 is disordered; it reads QPGTSHDVKPFSQNTYPVQPPLPLPGFESPAGPTPSPSAPLAPP. The segment covering 194–205 has biased composition (pro residues); that stretch reads GPTPSPSAPLAP.

In terms of assembly, interacts with WWTR1/TAZ. Interacts with YAP1. In terms of tissue distribution, preferentially expressed in lung and in skeletal muscle.

The protein localises to the nucleus. Functionally, transcription factor which plays a key role in the Hippo signaling pathway, a pathway involved in organ size control and tumor suppression by restricting proliferation and promoting apoptosis. The core of this pathway is composed of a kinase cascade wherein MST1/MST2, in complex with its regulatory protein SAV1, phosphorylates and activates LATS1/2 in complex with its regulatory protein MOB1, which in turn phosphorylates and inactivates YAP1 oncoprotein and WWTR1/TAZ. Acts by mediating gene expression of YAP1 and WWTR1/TAZ, thereby regulating cell proliferation, migration and epithelial mesenchymal transition (EMT) induction. Binds specifically and non-cooperatively to the Sph and GT-IIC 'enhansons' (5'-GTGGAATGT-3') and activates transcription. Binds to the M-CAT motif. Might play a role in the embryonic development of skeletal muscle. The polypeptide is Transcriptional enhancer factor TEF-3 (Tead4) (Mus musculus (Mouse)).